We begin with the raw amino-acid sequence, 307 residues long: Oxygen-dependent coproporphyrinogen-III oxidase (307 aa).

S99 lines the substrate pocket. The a divalent metal cation site is built by H103 and H113. H113 serves as the catalytic Proton donor. 115 to 117 (NVR) serves as a coordination point for substrate. A divalent metal cation contacts are provided by H152 and H182. An important for dimerization region spans residues 247-282 (YVEFNLVFDRGTLFGLQSGGRTESILMSMPPVANWR). Residue 265–267 (GGR) coordinates substrate.

The protein belongs to the aerobic coproporphyrinogen-III oxidase family. As to quaternary structure, homodimer. The cofactor is a divalent metal cation.

Its subcellular location is the cytoplasm. It catalyses the reaction coproporphyrinogen III + O2 + 2 H(+) = protoporphyrinogen IX + 2 CO2 + 2 H2O. The protein operates within porphyrin-containing compound metabolism; protoporphyrin-IX biosynthesis; protoporphyrinogen-IX from coproporphyrinogen-III (O2 route): step 1/1. Involved in the heme biosynthesis. Catalyzes the aerobic oxidative decarboxylation of propionate groups of rings A and B of coproporphyrinogen-III to yield the vinyl groups in protoporphyrinogen-IX. This Burkholderia multivorans (strain ATCC 17616 / 249) protein is Oxygen-dependent coproporphyrinogen-III oxidase.